We begin with the raw amino-acid sequence, 456 residues long: Adenylosuccinate lyase (456 aa).

N(6)-(1,2-dicarboxyethyl)-AMP contacts are provided by residues 15-16 (RY), 90-92 (NHD), and 122-123 (TS). Residue His171 is the Proton donor/acceptor of the active site. N(6)-(1,2-dicarboxyethyl)-AMP is bound at residue Gln247. Catalysis depends on Ser295, which acts as the Proton donor/acceptor. Residues Ser296, 301-303 (KVN), Asn309, Arg335, and 340-344 (STVLR) contribute to the N(6)-(1,2-dicarboxyethyl)-AMP site.

It belongs to the lyase 1 family. Adenylosuccinate lyase subfamily. Homotetramer. Residues from neighboring subunits contribute catalytic and substrate-binding residues to each active site.

The enzyme catalyses N(6)-(1,2-dicarboxyethyl)-AMP = fumarate + AMP. The catalysed reaction is (2S)-2-[5-amino-1-(5-phospho-beta-D-ribosyl)imidazole-4-carboxamido]succinate = 5-amino-1-(5-phospho-beta-D-ribosyl)imidazole-4-carboxamide + fumarate. It participates in purine metabolism; AMP biosynthesis via de novo pathway; AMP from IMP: step 2/2. The protein operates within purine metabolism; IMP biosynthesis via de novo pathway; 5-amino-1-(5-phospho-D-ribosyl)imidazole-4-carboxamide from 5-amino-1-(5-phospho-D-ribosyl)imidazole-4-carboxylate: step 2/2. Its function is as follows. Catalyzes two reactions in de novo purine nucleotide biosynthesis. Catalyzes the breakdown of 5-aminoimidazole- (N-succinylocarboxamide) ribotide (SAICAR or 2-[5-amino-1-(5-phospho-beta-D-ribosyl)imidazole-4-carboxamido]succinate) to 5-aminoimidazole-4-carboxamide ribotide (AICAR or 5-amino-1-(5-phospho-beta-D-ribosyl)imidazole-4-carboxamide) and fumarate, and of adenylosuccinate (ADS or N(6)-(1,2-dicarboxyethyl)-AMP) to adenosine monophosphate (AMP) and fumarate. In Legionella pneumophila subsp. pneumophila (strain Philadelphia 1 / ATCC 33152 / DSM 7513), this protein is Adenylosuccinate lyase (purB).